Here is a 322-residue protein sequence, read N- to C-terminus: Atrochrysone carboxyl ACP thioesterase nsrC (322 aa).

H105, H107, D109, and H110 together coordinate Zn(2+). The active-site Proton donor/acceptor is D109.

Belongs to the metallo-beta-lactamase superfamily. It depends on Zn(2+) as a cofactor.

The catalysed reaction is atrochrysone carboxyl-[ACP] + H2O = atrochrysone carboxylate + holo-[ACP] + H(+). It participates in secondary metabolite biosynthesis. Atrochrysone carboxyl ACP thioesterase; part of the gene cluster that mediates the biosynthesis of the tetrahydroxanthone dimer neosartorin, which exhibits antibacterial activity. The two different monomeric units appear to be synthesized by the same set of enzymes, among which the Baeyer-Villiger monooxygenase nsrF is the key enzyme for the divergence of the biosynthetic routes. The pathway begins with the synthesis of atrochrysone thioester by the polyketide synthase nsrB. The atrochrysone carboxyl ACP thioesterase nsrC then breaks the thioester bond and releases the atrochrysone carboxylic acid from AacuL. Atrochrysone carboxylic acid is decarboxylated by the decarboxylase nsrE, and oxidized by the anthrone oxygenase nsrD to yield emodin. Emodin is then reduced to emodin hydroquinone by the oxidoreductase nsrR. A-ring reduction by the short chain dehydrogenase nsrJ, dehydration by the scytalone dehydratase-like protein nsrI and probable spontaneous re-oxidation, results in overall deoxygenation to chrysophanol. The Baeyer-Villiger monooxygenase nsrF accepts chrysophanol as a substrate to insert one oxygen atom at two different positions to yield the precursors of both monomric units. NsrF is promiscuous/flexible in interacting with the 2 (non methylated and methylated) aromatic rings of chrysophanol, thus diverging the biosynthetic pathway at this point. After the hydrolysis of the lactones, methylesterification by the methyltransferase nsrG yields respectively moniliphenone and 2,2',6'-trihydroxy-4-methyl-6-methoxya-cyldiphenylmethanone. The next steps are the hydroxylation by the FAD-dependent monooxygenase nsrK, followed by isomerization by the monooxygenase nsrQ. The short chain dehydrogenase/reductase nsrO then catalyzes the C-5 ketoreduction to give the xanthone skeleton of blennolide C and 5-acetylblennolide A. The acetyltransferase nsrL has a strict substrate specificity and uses only blennolide A but not blennolide C to yield 5-acetylblennolide A as the single-acetylated product. In the final step of the biosynthesis, the heterodimerization of the 2 xanthones, blennolide C and 5-acetylblennolide A, is catalyzed by the cytochrome P450 monooxygenase nsrP. NsrP can utilize at least three different xanthones as its substrates to perform the dimerization reaction. The protein is Atrochrysone carboxyl ACP thioesterase nsrC of Aspergillus novofumigatus (strain IBT 16806).